We begin with the raw amino-acid sequence, 253 residues long: 5'/3'-nucleotidase SurE (253 aa).

A divalent metal cation-binding residues include Asp8, Asp9, Ser39, and Asn92.

It belongs to the SurE nucleotidase family. A divalent metal cation is required as a cofactor.

The protein resides in the cytoplasm. The enzyme catalyses a ribonucleoside 5'-phosphate + H2O = a ribonucleoside + phosphate. It carries out the reaction a ribonucleoside 3'-phosphate + H2O = a ribonucleoside + phosphate. It catalyses the reaction [phosphate](n) + H2O = [phosphate](n-1) + phosphate + H(+). Functionally, nucleotidase with a broad substrate specificity as it can dephosphorylate various ribo- and deoxyribonucleoside 5'-monophosphates and ribonucleoside 3'-monophosphates with highest affinity to 3'-AMP. Also hydrolyzes polyphosphate (exopolyphosphatase activity) with the preference for short-chain-length substrates (P20-25). Might be involved in the regulation of dNTP and NTP pools, and in the turnover of 3'-mononucleotides produced by numerous intracellular RNases (T1, T2, and F) during the degradation of various RNAs. In Citrobacter koseri (strain ATCC BAA-895 / CDC 4225-83 / SGSC4696), this protein is 5'/3'-nucleotidase SurE.